The following is a 465-amino-acid chain: D-ornithine/D-lysine decarboxylase (465 aa).

Lys80 carries the post-translational modification N6-(pyridoxal phosphate)lysine. Pyridoxal 5'-phosphate is bound by residues Gly259 and 307–310 (EPGR). The active-site Proton donor is the Cys387. Residue Tyr422 participates in pyridoxal 5'-phosphate binding.

It belongs to the Orn/Lys/Arg decarboxylase class-II family. Homodimer. Requires pyridoxal 5'-phosphate as cofactor.

It catalyses the reaction D-ornithine + H(+) = putrescine + CO2. The catalysed reaction is D-lysine + H(+) = cadaverine + CO2. Its function is as follows. Catalyzes the decarboxylation of D-ornithine and D-lysine. Ornithine is likely the physiological substrate. Has no detectable diaminopimelate decarboxylase activity in vitro. The sequence is that of D-ornithine/D-lysine decarboxylase from Salmonella typhimurium (strain LT2 / SGSC1412 / ATCC 700720).